A 229-amino-acid polypeptide reads, in one-letter code: 5'-methylthioadenosine/S-adenosylhomocysteine nucleosidase (229 aa).

Glutamate 12 (proton acceptor) is an active-site residue. Substrate-binding positions include glycine 78, isoleucine 152, and 173-174 (ME). The Proton donor role is filled by aspartate 197.

It belongs to the PNP/UDP phosphorylase family. MtnN subfamily.

It carries out the reaction S-adenosyl-L-homocysteine + H2O = S-(5-deoxy-D-ribos-5-yl)-L-homocysteine + adenine. The enzyme catalyses S-methyl-5'-thioadenosine + H2O = 5-(methylsulfanyl)-D-ribose + adenine. The catalysed reaction is 5'-deoxyadenosine + H2O = 5-deoxy-D-ribose + adenine. It participates in amino-acid biosynthesis; L-methionine biosynthesis via salvage pathway; S-methyl-5-thio-alpha-D-ribose 1-phosphate from S-methyl-5'-thioadenosine (hydrolase route): step 1/2. Catalyzes the irreversible cleavage of the glycosidic bond in both 5'-methylthioadenosine (MTA) and S-adenosylhomocysteine (SAH/AdoHcy) to adenine and the corresponding thioribose, 5'-methylthioribose and S-ribosylhomocysteine, respectively. Also cleaves 5'-deoxyadenosine, a toxic by-product of radical S-adenosylmethionine (SAM) enzymes, into 5-deoxyribose and adenine. This chain is 5'-methylthioadenosine/S-adenosylhomocysteine nucleosidase, found in Pasteurella multocida (strain Pm70).